The chain runs to 132 residues: SH2 domain-containing protein 1B2 (132 aa).

An SH2 domain is found at 5-101 (YYHGCLTKRE…GMVVHLSNPI (97 aa)).

Interacts with SLAMF1 (phosphorylated). Interacts with CD244. Interacts with Src kinases HCK, LYN, FYN, FGR and LCK (via kinase domains). Expressed in spleen. Expressed in macrophages, CD8(+) T-Cells and NK cells. Conflictingly found only in NK cells.

Its subcellular location is the cytoplasm. Cytoplasmic adapter regulating receptors of the signaling lymphocytic activation molecule (SLAM) family. In SLAM signaling may cooperate with Sh2d1a/SAP. Plays a role in regulation of effector functions of natural killer (NK) cells by controlling signal transduction through Cd244/2b4. However, conflicting results are reported which may reflect the use of different strain backgrounds. Proposed to act as an inhibitor of Cd244-mediated NK cell function including cytotoxicity and IFN-gamma production, the latter found also by triggering Klra4 and Klrk1 next to Cd244. Seems to positively regulate Cd244- and Cd84-dependent NK cell functions implicating Cd244-mediated phosphorylation of Vav1. In Mus musculus (Mouse), this protein is SH2 domain-containing protein 1B2 (Sh2d1b2).